The primary structure comprises 1877 residues: Proprotein convertase subtilisin/kexin type 5 (1877 aa).

The N-terminal stretch at 1–34 is a signal peptide; it reads MDWDWGNRCSRPGRRDLLCVLALLAGCLLPVCRT. Positions 35-116 are excised as a propeptide; sequence RVYTNHWAVK…QQVVKKRTKR (82 aa). Residues 117-1768 are Extracellular-facing; sequence DYDLSHAQST…EAEFYEHTKT (1652 aa). Residues 136–455 form the Peptidase S8 domain; it reads MWYMHCSDNT…FGLMDAEAMV (320 aa). Catalysis depends on charge relay system residues Asp173 and His214. Residues Asn227 and Asn383 are each glycosylated (N-linked (GlcNAc...) asparagine). Ser388 acts as the Charge relay system in catalysis. Positions 463–603 constitute a P/Homo B domain; it reads TVPQQHVCVE…SLVLYGTSVQ (141 aa). The Cell attachment site signature appears at 521–523; sequence RGD. FU repeat units lie at residues 632 to 682, 685 to 732, 736 to 779, 781 to 826, 834 to 881, 884 to 929, 931 to 981, 984 to 1030, 1034 to 1079, 1081 to 1123, 1127 to 1168, 1206 to 1248, 1252 to 1299, 1301 to 1345, 1347 to 1390, 1392 to 1438, 1442 to 1487, 1491 to 1536, 1540 to 1585, 1589 to 1636, 1640 to 1685, and 1691 to 1738; these read EDYA…GHYH, KKRC…GSYE, KNVC…GQFF, GHDC…SYYL, YKSC…GEYI, QGHC…WKFE, KKQC…GHYP, GHAC…GEFQ, YEEC…KTFG, KWEC…GFHG, LGEC…STWP, TSQN…GTWP, SGSC…GFYA, DGVC…KHVA, EGVC…SFYP, MRQC…GTYK, NDEC…VEYW, SHRC…GYHT, SQQC…GYYG, SGRC…HYYA, AQTC…GEYR, and NFNC…SHSR. Positions 638 to 1753 are CRM (Cys-rich motif); that stretch reads CDPECSEVGC…CDCQSSTDEC (1116 aa). N-linked (GlcNAc...) asparagine glycosylation is present at Asn667. N-linked (GlcNAc...) asparagine glycans are attached at residues Asn754, Asn804, and Asn854. N-linked (GlcNAc...) asparagine glycosylation is found at Asn951 and Asn1016. Asn1220 carries N-linked (GlcNAc...) asparagine glycosylation. Asn1317 is a glycosylation site (N-linked (GlcNAc...) asparagine). N-linked (GlcNAc...) asparagine glycosylation is present at Asn1523. N-linked (GlcNAc...) asparagine glycans are attached at residues Asn1711 and Asn1733. Residues 1769–1789 form a helical membrane-spanning segment; sequence ALLVTSGAMLLLLLGAAAVVW. The Cytoplasmic segment spans residues 1790–1877; that stretch reads RKSRSRPVAK…EYDDESYSYQ (88 aa). AC regions lie at residues 1825–1844 and 1856–1877; these read VIEYRDRDYDEDDEDDIVYM and YGLLDETEDDELEYDDESYSYQ.

Belongs to the peptidase S8 family. PC5A is expressed in most tissues but is most abundant in the intestine and adrenals. PC5B is expressed in the intestine, adrenals and lung but not in the brain.

Its subcellular location is the secreted. The protein resides in the endomembrane system. Serine endoprotease that processes various proproteins by cleavage at paired basic amino acids, recognizing the RXXX[KR]R consensus motif. Likely functions in the constitutive and regulated secretory pathways. Plays an essential role in pregnancy establishment by proteolytic activation of a number of important factors such as BMP2, CALD1 and alpha-integrins. May be responsible for the maturation of gastrointestinal peptides. May be involved in the cellular proliferation of adrenal cortex via the activation of growth factors. The protein is Proprotein convertase subtilisin/kexin type 5 (Pcsk5) of Mus musculus (Mouse).